Reading from the N-terminus, the 641-residue chain is Chaperone protein DnaK (641 aa).

Thr-201 carries the post-translational modification Phosphothreonine; by autocatalysis. The span at 604–622 (ASAEQGGAAPGADAGNAGK) shows a compositional bias: low complexity. The segment at 604–625 (ASAEQGGAAPGADAGNAGKAQD) is disordered.

This sequence belongs to the heat shock protein 70 family.

In terms of biological role, acts as a chaperone. This chain is Chaperone protein DnaK, found in Stenotrophomonas maltophilia (strain R551-3).